Consider the following 382-residue polypeptide: Anhydro-N-acetylmuramic acid kinase (382 aa).

ATP is bound at residue 9–16; sequence GTSLDGID.

This sequence belongs to the anhydro-N-acetylmuramic acid kinase family.

It carries out the reaction 1,6-anhydro-N-acetyl-beta-muramate + ATP + H2O = N-acetyl-D-muramate 6-phosphate + ADP + H(+). It functions in the pathway amino-sugar metabolism; 1,6-anhydro-N-acetylmuramate degradation. It participates in cell wall biogenesis; peptidoglycan recycling. In terms of biological role, catalyzes the specific phosphorylation of 1,6-anhydro-N-acetylmuramic acid (anhMurNAc) with the simultaneous cleavage of the 1,6-anhydro ring, generating MurNAc-6-P. Is required for the utilization of anhMurNAc either imported from the medium or derived from its own cell wall murein, and thus plays a role in cell wall recycling. This chain is Anhydro-N-acetylmuramic acid kinase, found in Bacillus anthracis (strain A0248).